The primary structure comprises 348 residues: Protein lifeguard 1 (348 aa).

The tract at residues 1 to 118 (MSHEKSFLVS…GNYQEEGPPS (118 aa)) is disordered. Over residues 14-41 (YPPPNPGYPVGPQAPMPPYVQPPYPGAP) the composition is skewed to pro residues. The segment covering 42-57 (YPQAAFQPSPYGQPGY) has biased composition (low complexity). Residues 82 to 101 (GPYPQSPFPPNPYGQPPPFQ) show a composition bias toward pro residues. A run of 7 helical transmembrane segments spans residues 142 to 162 (VFLVLTLQLSVTLSTVAIFTF), 174 to 194 (VWTYYVSYAIFFISLIVLSCC), 205 to 225 (LVALSILTISLSYMVGMIASF), 230 to 250 (AVIMAVGITTAVCFTVVIFSM), 260 to 280 (MGVLLVSVVVLFIFAILCIFI), 284 to 304 (ILEIVYASLGALLFTCFLAVD), and 323 to 343 (FAALNLYTDIINIFLYILTII).

It belongs to the BI1 family. LFG subfamily.

It localises to the membrane. In terms of biological role, potential apoptotic regulator. This chain is Protein lifeguard 1 (Grina), found in Rattus norvegicus (Rat).